The chain runs to 146 residues: Large ribosomal subunit protein bL21 (146 aa).

Residues Ile117–Asn146 form a disordered region. The segment covering Ser128–Asn146 has biased composition (basic and acidic residues).

This sequence belongs to the bacterial ribosomal protein bL21 family. As to quaternary structure, part of the 50S ribosomal subunit. Contacts protein L20.

Its function is as follows. This protein binds to 23S rRNA in the presence of protein L20. The chain is Large ribosomal subunit protein bL21 from Prochlorococcus marinus (strain MIT 9301).